Here is a 153-residue protein sequence, read N- to C-terminus: Ribosome maturation factor RimP (153 aa).

The protein belongs to the RimP family.

It is found in the cytoplasm. Functionally, required for maturation of 30S ribosomal subunits. The polypeptide is Ribosome maturation factor RimP (Pelotomaculum thermopropionicum (strain DSM 13744 / JCM 10971 / SI)).